Here is a 413-residue protein sequence, read N- to C-terminus: Multifunctional CCA protein (413 aa).

Residues glycine 8 and arginine 11 each contribute to the ATP site. The CTP site is built by glycine 8 and arginine 11. Positions 21 and 23 each coordinate Mg(2+). Residues arginine 91, arginine 137, and arginine 140 each contribute to the ATP site. CTP-binding residues include arginine 91, arginine 137, and arginine 140. The 102-residue stretch at 228-329 (TGIHTLMVLE…VKLFDKADLW (102 aa)) folds into the HD domain.

Belongs to the tRNA nucleotidyltransferase/poly(A) polymerase family. Bacterial CCA-adding enzyme type 1 subfamily. As to quaternary structure, monomer. Can also form homodimers and oligomers. It depends on Mg(2+) as a cofactor. Ni(2+) is required as a cofactor.

It catalyses the reaction a tRNA precursor + 2 CTP + ATP = a tRNA with a 3' CCA end + 3 diphosphate. It carries out the reaction a tRNA with a 3' CCA end + 2 CTP + ATP = a tRNA with a 3' CCACCA end + 3 diphosphate. Functionally, catalyzes the addition and repair of the essential 3'-terminal CCA sequence in tRNAs without using a nucleic acid template. Adds these three nucleotides in the order of C, C, and A to the tRNA nucleotide-73, using CTP and ATP as substrates and producing inorganic pyrophosphate. tRNA 3'-terminal CCA addition is required both for tRNA processing and repair. Also involved in tRNA surveillance by mediating tandem CCA addition to generate a CCACCA at the 3' terminus of unstable tRNAs. While stable tRNAs receive only 3'-terminal CCA, unstable tRNAs are marked with CCACCA and rapidly degraded. This Shewanella loihica (strain ATCC BAA-1088 / PV-4) protein is Multifunctional CCA protein.